A 271-amino-acid chain; its full sequence is Type III pantothenate kinase (271 aa).

D6–V13 lines the ATP pocket. G109–R112 serves as a coordination point for substrate. The Proton acceptor role is filled by D111. D131 is a K(+) binding site. T134 is a binding site for ATP. T186 contributes to the substrate binding site.

It belongs to the type III pantothenate kinase family. As to quaternary structure, homodimer. NH4(+) serves as cofactor. Requires K(+) as cofactor.

Its subcellular location is the cytoplasm. The catalysed reaction is (R)-pantothenate + ATP = (R)-4'-phosphopantothenate + ADP + H(+). The protein operates within cofactor biosynthesis; coenzyme A biosynthesis; CoA from (R)-pantothenate: step 1/5. In terms of biological role, catalyzes the phosphorylation of pantothenate (Pan), the first step in CoA biosynthesis. This Rhodococcus jostii (strain RHA1) protein is Type III pantothenate kinase.